Reading from the N-terminus, the 134-residue chain is Small ribosomal subunit protein uS8c (134 aa).

The protein belongs to the universal ribosomal protein uS8 family. In terms of assembly, part of the 30S ribosomal subunit.

The protein resides in the plastid. In terms of biological role, one of the primary rRNA binding proteins, it binds directly to 16S rRNA central domain where it helps coordinate assembly of the platform of the 30S subunit. This chain is Small ribosomal subunit protein uS8c (rps8), found in Cuscuta gronovii (Common dodder).